Reading from the N-terminus, the 133-residue chain is MVFSAREIKWGVAHIYSSYNNTIIHITDLTGAETVARTSGGMVVKADREKPSPYAAMLAASRAAQQAMDRGIMALHIKVRAPGGHGPKTPGPGAQAAIRALARAGFIIGRIEDVTPLPHDTTRRPGGRRGRRV.

It belongs to the universal ribosomal protein uS11 family. As to quaternary structure, part of the 30S ribosomal subunit.

In terms of biological role, located on the platform of the 30S subunit. The sequence is that of Small ribosomal subunit protein uS11 from Hyperthermus butylicus (strain DSM 5456 / JCM 9403 / PLM1-5).